A 355-amino-acid chain; its full sequence is Guanine nucleotide-binding protein G(i) subunit alpha-2 (355 aa).

Gly2 carries the N-myristoyl glycine lipid modification. A lipid anchor (S-palmitoyl cysteine) is attached at Cys3. In terms of domain architecture, G-alpha spans 32 to 355 (REVKLLLLGA…KNNLKDCGLF (324 aa)). The tract at residues 35–48 (KLLLLGAGESGKST) is G1 motif. Residues 40–47 (GAGESGKS), 176–182 (LRTRVKT), 201–205 (DVGGQ), 270–273 (NKKD), and Ala327 contribute to the GTP site. Mg(2+)-binding residues include Ser47 and Thr182. The interval 174–182 (DVLRTRVKT) is G2 motif. Positions 197 to 206 (FKMFDVGGQR) are G3 motif. Positions 266 to 273 (ILFLNKKD) are G4 motif. Residues 325 to 330 (TCATDT) are G5 motif.

The protein belongs to the G-alpha family. G(i/o/t/z) subfamily. As to quaternary structure, g proteins are composed of 3 units; alpha, beta and gamma. The alpha chain contains the guanine nucleotide binding site.

The protein localises to the cytoplasm. It is found in the cytoskeleton. The protein resides in the microtubule organizing center. It localises to the centrosome. Its subcellular location is the cell membrane. Its function is as follows. Guanine nucleotide-binding proteins (G proteins) are involved as modulators or transducers in various transmembrane signaling systems. The G(i) proteins are involved in hormonal regulation of adenylate cyclase: they inhibit the cyclase in response to beta-adrenergic stimuli. May play a role in cell division. This chain is Guanine nucleotide-binding protein G(i) subunit alpha-2 (GNAI2), found in Gallus gallus (Chicken).